Reading from the N-terminus, the 216-residue chain is tRNA (guanine-N(7)-)-methyltransferase (216 aa).

Residues E44, E69, N97, and D119 each contribute to the S-adenosyl-L-methionine site. D119 is a catalytic residue. Residues K123, D155, and 192–195 each bind substrate; that span reads TEYE.

The protein belongs to the class I-like SAM-binding methyltransferase superfamily. TrmB family.

It catalyses the reaction guanosine(46) in tRNA + S-adenosyl-L-methionine = N(7)-methylguanosine(46) in tRNA + S-adenosyl-L-homocysteine. The protein operates within tRNA modification; N(7)-methylguanine-tRNA biosynthesis. In terms of biological role, catalyzes the formation of N(7)-methylguanine at position 46 (m7G46) in tRNA. In Lysinibacillus sphaericus (strain C3-41), this protein is tRNA (guanine-N(7)-)-methyltransferase.